The sequence spans 457 residues: Sensor protein CpxA (457 aa).

Over 1 to 7 (MIGSLTA) the chain is Cytoplasmic. Residues 8-29 (RIFAIFWLTLALVLMLVLMLPK) traverse the membrane as a helical segment. The Periplasmic segment spans residues 30 to 163 (LDSRQMTELL…SDFINLLFDR (134 aa)). Residues 164–184 (PLLLLIVTMLVSTPLLLWLAW) traverse the membrane as a helical segment. One can recognise an HAMP domain in the interval 185–237 (SLAKPARKLKNAADEVAQGNLRQHPELEAGPQEFLAAGASFNQMVTALERMMT). Over 185-457 (SLAKPARKLK…VIWLPLYKRS (273 aa)) the chain is Cytoplasmic. The region spanning 245–455 (DISHELRTPL…RLVIWLPLYK (211 aa)) is the Histidine kinase domain. A Phosphohistidine; by autocatalysis modification is found at His-248.

The protein localises to the cell inner membrane. The catalysed reaction is ATP + protein L-histidine = ADP + protein N-phospho-L-histidine.. Its function is as follows. This protein is involved in several diverse cellular processes, such as the functioning of acetohydroxyacid synthetase I, in the biosynthesis of isoleucine and valine, the TraJ protein activation activity for tra gene expression in F plasmid, and the synthesis, translocation, or stability of cell envelope proteins. Activates CpxR by phosphorylation. In Escherichia coli O157:H7, this protein is Sensor protein CpxA (cpxA).